Reading from the N-terminus, the 180-residue chain is Oligoribonuclease (180 aa).

The 164-residue stretch at 7-170 (LIWIDLEMTG…DDIRESIAEL (164 aa)) folds into the Exonuclease domain. Tyr128 is an active-site residue.

Belongs to the oligoribonuclease family.

The protein resides in the cytoplasm. 3'-to-5' exoribonuclease specific for small oligoribonucleotides. This Pseudomonas aeruginosa (strain UCBPP-PA14) protein is Oligoribonuclease.